Here is a 362-residue protein sequence, read N- to C-terminus: Beta-ketoacyl-[acyl-carrier-protein] synthase III 2 (362 aa).

Residues Cys113 and His251 contribute to the active site. The tract at residues 252–256 is ACP-binding; the sequence is QANIR. Asn281 is a catalytic residue.

This sequence belongs to the thiolase-like superfamily. FabH family. As to quaternary structure, homodimer.

The protein localises to the cytoplasm. The catalysed reaction is malonyl-[ACP] + acetyl-CoA + H(+) = 3-oxobutanoyl-[ACP] + CO2 + CoA. The protein operates within lipid metabolism; fatty acid biosynthesis. In terms of biological role, catalyzes the condensation reaction of fatty acid synthesis by the addition to an acyl acceptor of two carbons from malonyl-ACP. Catalyzes the first condensation reaction which initiates fatty acid synthesis and may therefore play a role in governing the total rate of fatty acid production. Possesses both acetoacetyl-ACP synthase and acetyl transacylase activities. Its substrate specificity determines the biosynthesis of branched-chain and/or straight-chain of fatty acids. In Vibrio cholerae serotype O1 (strain ATCC 39315 / El Tor Inaba N16961), this protein is Beta-ketoacyl-[acyl-carrier-protein] synthase III 2.